The sequence spans 124 residues: Fluoride-specific ion channel FluC (124 aa).

The next 4 membrane-spanning stretches (helical) occupy residues 1–21, 35–55, 66–86, and 99–119; these read MFNLLLVVVGGGIGAGIRHLT, WGTMAINIVGSFAMGLFIAIL, LFVATGIFGGFTTFSAFSLDF, and FGYALASVIGAIIALFLGLWL. Glycine 74 and threonine 77 together coordinate Na(+).

Belongs to the fluoride channel Fluc/FEX (TC 1.A.43) family.

The protein localises to the cell inner membrane. The catalysed reaction is fluoride(in) = fluoride(out). With respect to regulation, na(+) is not transported, but it plays an essential structural role and its presence is essential for fluoride channel function. Functionally, fluoride-specific ion channel. Important for reducing fluoride concentration in the cell, thus reducing its toxicity. The polypeptide is Fluoride-specific ion channel FluC (Mesorhizobium japonicum (strain LMG 29417 / CECT 9101 / MAFF 303099) (Mesorhizobium loti (strain MAFF 303099))).